The primary structure comprises 1053 residues: Probable sucrose-phosphate synthase (1053 aa).

Residues 103 to 115 are compositionally biased toward basic and acidic residues; that stretch reads RRQERERGRREAV. Disordered regions lie at residues 103–127 and 673–693; these read RRQE…EGEK and LRSI…DSLR.

The protein belongs to the glycosyltransferase 1 family. In terms of assembly, homodimer or homotetramer.

The catalysed reaction is beta-D-fructose 6-phosphate + UDP-alpha-D-glucose = sucrose 6(F)-phosphate + UDP + H(+). The protein operates within glycan biosynthesis; sucrose biosynthesis; sucrose from D-fructose 6-phosphate and UDP-alpha-D-glucose: step 1/2. Its activity is regulated as follows. Activity is regulated by phosphorylation and moderated by concentration of metabolites and light. Functionally, plays a role in photosynthetic sucrose synthesis by catalyzing the rate-limiting step of sucrose biosynthesis from UDP-glucose and fructose- 6-phosphate. Involved in the regulation of carbon partitioning in the leaves of plants. May regulate the synthesis of sucrose and therefore play a major role as a limiting factor in the export of photoassimilates out of the leaf. Plays a role for sucrose availability that is essential for plant growth and fiber elongation. This Solanum tuberosum (Potato) protein is Probable sucrose-phosphate synthase (SPS).